The sequence spans 66 residues: ATP synthase F(0) complex subunit 8 (66 aa).

A helical transmembrane segment spans residues 8-24; it reads TWLTMILSMFLTLFIIF. Lysine 54 bears the N6-acetyllysine; alternate mark. Lysine 54 bears the N6-succinyllysine; alternate mark. Lysine 57 carries the post-translational modification N6-acetyllysine.

It belongs to the ATPase protein 8 family. As to quaternary structure, component of the ATP synthase complex composed at least of ATP5F1A/subunit alpha, ATP5F1B/subunit beta, ATP5MC1/subunit c (homooctomer), MT-ATP6/subunit a, MT-ATP8/subunit 8, ATP5ME/subunit e, ATP5MF/subunit f, ATP5MG/subunit g, ATP5MK/subunit k, ATP5MJ/subunit j, ATP5F1C/subunit gamma, ATP5F1D/subunit delta, ATP5F1E/subunit epsilon, ATP5PF/subunit F6, ATP5PB/subunit b, ATP5PD/subunit d, ATP5PO/subunit OSCP. ATP synthase complex consists of a soluble F(1) head domain (subunits alpha(3) and beta(3)) - the catalytic core - and a membrane F(0) domain - the membrane proton channel (subunits c, a, 8, e, f, g, k and j). These two domains are linked by a central stalk (subunits gamma, delta, and epsilon) rotating inside the F1 region and a stationary peripheral stalk (subunits F6, b, d, and OSCP). Interacts with PRICKLE3.

The protein localises to the mitochondrion membrane. Subunit 8, of the mitochondrial membrane ATP synthase complex (F(1)F(0) ATP synthase or Complex V) that produces ATP from ADP in the presence of a proton gradient across the membrane which is generated by electron transport complexes of the respiratory chain. ATP synthase complex consist of a soluble F(1) head domain - the catalytic core - and a membrane F(1) domain - the membrane proton channel. These two domains are linked by a central stalk rotating inside the F(1) region and a stationary peripheral stalk. During catalysis, ATP synthesis in the catalytic domain of F(1) is coupled via a rotary mechanism of the central stalk subunits to proton translocation. In vivo, can only synthesize ATP although its ATP hydrolase activity can be activated artificially in vitro. Part of the complex F(0) domain. This is ATP synthase F(0) complex subunit 8 from Bos mutus grunniens (Wild yak).